Consider the following 420-residue polypeptide: D-tagatose-1,6-bisphosphate aldolase subunit GatZ (420 aa).

This sequence belongs to the GatZ/KbaZ family. GatZ subfamily. Forms a complex with GatY.

The protein operates within carbohydrate metabolism; D-tagatose 6-phosphate degradation; D-glyceraldehyde 3-phosphate and glycerone phosphate from D-tagatose 6-phosphate: step 2/2. In terms of biological role, component of the tagatose-1,6-bisphosphate aldolase GatYZ that is required for full activity and stability of the Y subunit. Could have a chaperone-like function for the proper and stable folding of GatY. When expressed alone, GatZ does not show any aldolase activity. Is involved in the catabolism of galactitol. This chain is D-tagatose-1,6-bisphosphate aldolase subunit GatZ, found in Escherichia coli O7:K1 (strain IAI39 / ExPEC).